Consider the following 514-residue polypeptide: AAA-ATPase ASD, mitochondrial (514 aa).

A helical transmembrane segment spans residues 7–24 (VWTNTGSALASLVFIYTI). 250–257 (GPPGTGKS) is a binding site for ATP. 2 disordered regions span residues 311–342 (GQRK…ENKG) and 467–514 (KEEA…TMKD). Composition is skewed to basic and acidic residues over residues 331–342 (KQMKKDQGENKG) and 467–502 (KEEA…KEEK).

The protein belongs to the AAA ATPase family. BCS1 subfamily. It depends on Mg(2+) as a cofactor. In terms of tissue distribution, expressed in seeds, specifically in the embryo.

The protein localises to the mitochondrion membrane. It carries out the reaction ATP + H2O = ADP + phosphate + H(+). In terms of biological role, required to regulate morphology and anatomy during seed maturation. The polypeptide is AAA-ATPase ASD, mitochondrial (AATP1) (Arabidopsis thaliana (Mouse-ear cress)).